Here is a 382-residue protein sequence, read N- to C-terminus: Dual-specificity RNA methyltransferase RlmN (382 aa).

Catalysis depends on Glu96, which acts as the Proton acceptor. One can recognise a Radical SAM core domain in the interval 102–340; sequence QNGRGTLCVS…VTVRTTRGDD (239 aa). Cys109 and Cys345 are disulfide-bonded. Cys116, Cys120, and Cys123 together coordinate [4Fe-4S] cluster. Residues 170–171, Ser202, 224–226, and Asn302 each bind S-adenosyl-L-methionine; these read GE and SLH. The S-methylcysteine intermediate role is filled by Cys345.

Belongs to the radical SAM superfamily. RlmN family. It depends on [4Fe-4S] cluster as a cofactor.

It is found in the cytoplasm. The enzyme catalyses adenosine(2503) in 23S rRNA + 2 reduced [2Fe-2S]-[ferredoxin] + 2 S-adenosyl-L-methionine = 2-methyladenosine(2503) in 23S rRNA + 5'-deoxyadenosine + L-methionine + 2 oxidized [2Fe-2S]-[ferredoxin] + S-adenosyl-L-homocysteine. It carries out the reaction adenosine(37) in tRNA + 2 reduced [2Fe-2S]-[ferredoxin] + 2 S-adenosyl-L-methionine = 2-methyladenosine(37) in tRNA + 5'-deoxyadenosine + L-methionine + 2 oxidized [2Fe-2S]-[ferredoxin] + S-adenosyl-L-homocysteine. Its function is as follows. Specifically methylates position 2 of adenine 2503 in 23S rRNA and position 2 of adenine 37 in tRNAs. m2A2503 modification seems to play a crucial role in the proofreading step occurring at the peptidyl transferase center and thus would serve to optimize ribosomal fidelity. The chain is Dual-specificity RNA methyltransferase RlmN from Ectopseudomonas mendocina (strain ymp) (Pseudomonas mendocina).